The chain runs to 117 residues: Large ribosomal subunit protein bL17 (117 aa).

The protein belongs to the bacterial ribosomal protein bL17 family. Part of the 50S ribosomal subunit. Contacts protein L32.

The polypeptide is Large ribosomal subunit protein bL17 (Campylobacter jejuni subsp. doylei (strain ATCC BAA-1458 / RM4099 / 269.97)).